Here is a 287-residue protein sequence, read N- to C-terminus: Mitochondrial glycine transporter A (287 aa).

3 Solcar repeats span residues 7 to 97, 104 to 188, and 198 to 282; these read HPAV…LKQR, PGPL…TKHL, and YAPV…LMAQ. 6 helical membrane-spanning segments follow: residues 13 to 38, 72 to 98, 110 to 135, 163 to 186, 202 to 228, and 257 to 275; these read FMCGSLSGTCSTLLFQPLDLVKTRLQ, GVSPSFVRCIPGVGIYFSTYFTLKQRY, VLLGAGARCVAGVFMLPVTVIKTRFE, GLMATLLRDAPFSGIYVMIYSQTK, ANFSCGVLAGVLASVLTQPADVVKTHI, and GAVPRSLRRTMMAAMAWTV.

This sequence belongs to the mitochondrial carrier (TC 2.A.29) family. SLC25A38 subfamily. At 24 hours post-fertilization, expressed predominantly in posterior blood island, posterior cardinal vein and circulating blood, as well as in somites, brain and retina. At 34 hours post-fertilization, becomes restricted to posterior blood island and circulating blood.

The protein localises to the mitochondrion inner membrane. The enzyme catalyses glycine(in) = glycine(out). Its function is as follows. Mitochondrial glycine transporter that imports glycine into the mitochondrial matrix. Plays an important role in providing glycine for the first enzymatic step in heme biosynthesis, the condensation of glycine with succinyl-CoA to produce 5-aminolevulinate (ALA) in the mitochondrial matrix. Required during erythropoiesis. In terms of biological role, may play a role as pro-apoptotic protein that induces caspase-dependent apoptosis. The chain is Mitochondrial glycine transporter A (slc25a38a) from Danio rerio (Zebrafish).